Reading from the N-terminus, the 591-residue chain is V-type ATP synthase alpha chain (591 aa).

233–240 (GPFGAGKT) is a binding site for ATP.

The protein belongs to the ATPase alpha/beta chains family.

The enzyme catalyses ATP + H2O + 4 H(+)(in) = ADP + phosphate + 5 H(+)(out). Produces ATP from ADP in the presence of a proton gradient across the membrane. The V-type alpha chain is a catalytic subunit. The polypeptide is V-type ATP synthase alpha chain (Streptococcus pyogenes serotype M1).